The sequence spans 689 residues: Glycine--tRNA ligase beta subunit (689 aa).

Belongs to the class-II aminoacyl-tRNA synthetase family. As to quaternary structure, tetramer of two alpha and two beta subunits.

Its subcellular location is the cytoplasm. It catalyses the reaction tRNA(Gly) + glycine + ATP = glycyl-tRNA(Gly) + AMP + diphosphate. This Shewanella sediminis (strain HAW-EB3) protein is Glycine--tRNA ligase beta subunit.